The following is a 296-amino-acid chain: MATVQPIVNSHLSELDEDVFHHFGFTTKSFDFKEKFGDVKFVCVCGSSGRIHNFAISMAKLAGLALPVENIAGSHARFVLYKVDHILFADHGIGIPSTLILMHEVTKLLYYAGCKDVLFIRLGTSDGLGVKPGTIVLSDRCVNTKLEPYNELCILGKPVRRQTKVDSNAVNELKKLSENLSLKCSVVVGGTITANDFYEELGRLNGSICTFSKEEKLAFLQSVYDHGIRNMEMEGAAITSHCNLTGHRAILVCVTVVNRLETDEVTTSTDEFKLFEQLPGQLVGEYLKRNNGIIVR.

Belongs to the PNP/UDP phosphorylase family. As to quaternary structure, homodimer.

In Schistosoma mansoni (Blood fluke), this protein is Inactive uridine phosphorylase B.